A 288-amino-acid chain; its full sequence is Eukaryotic translation initiation factor 3 subunit F-2 (288 aa).

The MPN domain maps to V12 to G149.

Belongs to the eIF-3 subunit F family. Component of the eukaryotic translation initiation factor 3 (eIF-3) complex. The eIF-3 complex interacts with pix.

The protein localises to the cytoplasm. Functionally, component of the eukaryotic translation initiation factor 3 (eIF-3) complex, which is involved in protein synthesis of a specialized repertoire of mRNAs and, together with other initiation factors, stimulates binding of mRNA and methionyl-tRNAi to the 40S ribosome. The eIF-3 complex specifically targets and initiates translation of a subset of mRNAs involved in cell proliferation. The sequence is that of Eukaryotic translation initiation factor 3 subunit F-2 from Drosophila persimilis (Fruit fly).